Here is a 182-residue protein sequence, read N- to C-terminus: Ribulose bisphosphate carboxylase small subunit, chloroplastic (182 aa).

A chloroplast-targeting transit peptide spans 1–58 (MACSMISSATVAAVSRASPAQSSMVAPFTCLKSTSAFPVTQKTNNDITSIASNGGRVQ).

This sequence belongs to the RuBisCO small chain family. In terms of assembly, heterohexadecamer of 8 large and 8 small subunits.

Its subcellular location is the plastid. The protein localises to the chloroplast. Its function is as follows. RuBisCO catalyzes two reactions: the carboxylation of D-ribulose 1,5-bisphosphate, the primary event in carbon dioxide fixation, as well as the oxidative fragmentation of the pentose substrate. Both reactions occur simultaneously and in competition at the same active site. Although the small subunit is not catalytic it is essential for maximal activity. The chain is Ribulose bisphosphate carboxylase small subunit, chloroplastic from Betula pendula (European white birch).